Reading from the N-terminus, the 159-residue chain is Antitoxin Xre (159 aa).

It belongs to the MbcA/ParS/Xre antitoxin family. In terms of assembly, homodimer. Forms a complex with cognate toxin Res; the 2 toxin molecules dimerize and each contacts an Xre homodimer. Most Res-Xre contacts are between the antitoxin molecule closest to the toxin.

Functionally, probable antitoxin component of a type II toxin-antitoxin (TA) system. In vivo probably neutralizes the toxic effect of cognate toxin Res. This chain is Antitoxin Xre, found in Pseudomonas putida (strain ATCC 47054 / DSM 6125 / CFBP 8728 / NCIMB 11950 / KT2440).